The chain runs to 246 residues: Proteasome subunit alpha (246 aa).

The protein belongs to the peptidase T1A family. As to quaternary structure, the 20S proteasome core is composed of 14 alpha and 14 beta subunits that assemble into four stacked heptameric rings, resulting in a barrel-shaped structure. The two inner rings, each composed of seven catalytic beta subunits, are sandwiched by two outer rings, each composed of seven alpha subunits. The catalytic chamber with the active sites is on the inside of the barrel. Has a gated structure, the ends of the cylinder being occluded by the N-termini of the alpha-subunits. Is capped at one or both ends by the proteasome regulatory ATPase, PAN.

The protein resides in the cytoplasm. The formation of the proteasomal ATPase PAN-20S proteasome complex, via the docking of the C-termini of PAN into the intersubunit pockets in the alpha-rings, triggers opening of the gate for substrate entry. Interconversion between the open-gate and close-gate conformations leads to a dynamic regulation of the 20S proteasome proteolysis activity. Functionally, component of the proteasome core, a large protease complex with broad specificity involved in protein degradation. The sequence is that of Proteasome subunit alpha from Methanopyrus kandleri (strain AV19 / DSM 6324 / JCM 9639 / NBRC 100938).